Reading from the N-terminus, the 600-residue chain is Cationic amino acid transporter 4, vacuolar (600 aa).

Topologically, residues 1–32 (MNSLVRRKQVDSVHLIKNDGPHQLAKKLSAVD) are cytoplasmic. A helical transmembrane segment spans residues 33 to 53 (LVAIGVGTTIGAGVYILVGTV). At 54–60 (AREHTGP) the chain is on the vacuolar side. Residues 61 to 81 (ALAVSFFIAGVAAALSACCYA) traverse the membrane as a helical segment. Residues 82–92 (ELASRCPSAGS) lie on the Cytoplasmic side of the membrane. Residues 93 to 115 (AYHYAYICLGEGIAWLVGWALVL) form a helical membrane-spanning segment. At 116-152 (DYTIGGSAIARGITPNLASFFGGLDNLPVFLARQTIP) the chain is on the vacuolar side. Residues 153–173 (GVGIVVDPCAALLIMIVTILL) traverse the membrane as a helical segment. Residues 174–184 (CFGIKESSTVQ) are Cytoplasmic-facing. A helical membrane pass occupies residues 185–205 (AIVTSVNVCTLVFIIVVGGYL). Over 206 to 220 (ACKTGWVGYDLPSGY) the chain is Vacuolar. The helical transmembrane segment at 221–241 (FPFGLNGILAGSAVVFFSYIG) threads the bilayer. At 242-264 (FDTVTSTAEEVKNPQRDLPLGIG) the chain is on the cytoplasmic side. Residues 265–285 (IALLICCILYMLLSVVIVGLV) traverse the membrane as a helical segment. The Vacuolar portion of the chain corresponds to 286–308 (PYYSLNPDTPISSAFGDSGMQWA). The helical transmembrane segment at 309–329 (AYILTTGAITALCASLLGSLL) threads the bilayer. At 330-360 (AQPRIFMAMARDGLLPAFFSEISPRTQVPVK) the chain is on the cytoplasmic side. Residues 361-381 (STIAIGVLAAALAFFMDVAQL) traverse the membrane as a helical segment. A topological domain (vacuolar) is located at residue Ser-382. The helical transmembrane segment at 383 to 403 (EMVSVGTLMAFTAVAVCVLVL) threads the bilayer. Over 404-462 (RYVPPDGVPLSSSSQTLSDTDESRAETENFLVDAIESSDSPLLGNETARDEKYFGKRRK) the chain is Cytoplasmic. The helical transmembrane segment at 463–483 (IAAWSIALVCIGVLGLASAAS) threads the bilayer. The Vacuolar segment spans residues 484 to 492 (AERLPSFPR). A helical membrane pass occupies residues 493–513 (FTICGVSAVILLGSLITLGYI). At 514 to 528 (DEDEERHNFGHKGGF) the chain is on the cytoplasmic side. The helical transmembrane segment at 529–549 (LCPFVPYLPVLCILINTYLII) threads the bilayer. Asn-550 is a topological domain (vacuolar). A helical transmembrane segment spans residues 551–571 (IGAGTWIRVLIWLLIGSMIYI). Topologically, residues 572 to 600 (FYGRSHSLLNNAVYVPTMTCTRKTTDHLA) are cytoplasmic.

It belongs to the amino acid-polyamine-organocation (APC) superfamily. Cationic amino acid transporter (CAT) (TC 2.A.3.3) family. Expressed in roots, stems, flowers, and leaves.

Its subcellular location is the vacuole membrane. Functionally, permease involved in the transport of the cationic amino acids. The sequence is that of Cationic amino acid transporter 4, vacuolar (CAT4) from Arabidopsis thaliana (Mouse-ear cress).